A 339-amino-acid chain; its full sequence is Lymphocyte-specific protein 1 (339 aa).

Positions 1–198 are disordered; it reads MAEASSDPGA…SPPLSPTTKL (198 aa). Serine 24 is modified (phosphoserine). Basic and acidic residues-rich tracts occupy residues 32 to 43 and 51 to 61; these read VHEQCQHERDRQ and GGGHVPERPKQ. Serine 111 carries the phosphoserine modification. Over residues 117–140 the composition is skewed to basic and acidic residues; it reads EDRPGLHAYEKEDSDEVHLEELSL. Threonine 175 bears the Phosphothreonine mark. Serine 177, serine 188, serine 189, and serine 193 each carry phosphoserine. Positions 185 to 196 are enriched in polar residues; it reads IEQSSPPLSPTT. Phosphoserine; by MAPKAPK2 is present on serine 252. The disordered stretch occupies residues 294-315; that stretch reads KSLWEQKGGSKTSSTIKSTPSG. Low complexity predominate over residues 300–315; the sequence is KGGSKTSSTIKSTPSG. The residue at position 327 (lysine 327) is an N6-acetyllysine.

As to quaternary structure, binds actin. Phosphorylated by casein kinase II, protein kinase C and MAPKAPK2. Phosphorylation by PKC induces translocation from membrane to cytoplasm. Phosphorylation by MAPKAPK2 may regulate neutrophil chemotaxis. As to expression, activated T-lymphocytes.

The protein localises to the cell membrane. Functionally, may play a role in mediating neutrophil activation and chemotaxis. The polypeptide is Lymphocyte-specific protein 1 (LSP1) (Homo sapiens (Human)).